The following is a 164-amino-acid chain: NADH-quinone oxidoreductase subunit B (164 aa).

[4Fe-4S] cluster-binding residues include Cys-38, Cys-39, Cys-104, and Cys-133.

It belongs to the complex I 20 kDa subunit family. NDH-1 is composed of 14 different subunits. Subunits NuoB, C, D, E, F, and G constitute the peripheral sector of the complex. [4Fe-4S] cluster is required as a cofactor.

It is found in the cell inner membrane. The enzyme catalyses a quinone + NADH + 5 H(+)(in) = a quinol + NAD(+) + 4 H(+)(out). NDH-1 shuttles electrons from NADH, via FMN and iron-sulfur (Fe-S) centers, to quinones in the respiratory chain. The immediate electron acceptor for the enzyme in this species is believed to be ubiquinone. Couples the redox reaction to proton translocation (for every two electrons transferred, four hydrogen ions are translocated across the cytoplasmic membrane), and thus conserves the redox energy in a proton gradient. In Protochlamydia amoebophila (strain UWE25), this protein is NADH-quinone oxidoreductase subunit B.